Here is a 358-residue protein sequence, read N- to C-terminus: Fructose-bisphosphate aldolase (358 aa).

Position 62 (Ser-62) interacts with D-glyceraldehyde 3-phosphate. Asp-109 acts as the Proton donor in catalysis. Zn(2+) contacts are provided by His-110, Asp-144, Glu-174, and His-226. Gly-227 is a binding site for dihydroxyacetone phosphate. His-264 serves as a coordination point for Zn(2+). Residues 265–267 and 286–289 each bind dihydroxyacetone phosphate; these read GGS and NIDT.

The protein belongs to the class II fructose-bisphosphate aldolase family. Zn(2+) serves as cofactor.

It carries out the reaction beta-D-fructose 1,6-bisphosphate = D-glyceraldehyde 3-phosphate + dihydroxyacetone phosphate. It participates in carbohydrate degradation; glycolysis; D-glyceraldehyde 3-phosphate and glycerone phosphate from D-glucose: step 4/4. In terms of biological role, catalyzes the aldol condensation of dihydroxyacetone phosphate (DHAP or glycerone-phosphate) with glyceraldehyde 3-phosphate (G3P) to form fructose 1,6-bisphosphate (FBP) in gluconeogenesis and the reverse reaction in glycolysis. This chain is Fructose-bisphosphate aldolase (fba), found in Edwardsiella ictaluri (strain 93-146).